Consider the following 200-residue polypeptide: ATP-dependent Clp protease proteolytic subunit (200 aa).

Ser102 acts as the Nucleophile in catalysis. The active site involves His127.

The protein belongs to the peptidase S14 family. As to quaternary structure, fourteen ClpP subunits assemble into 2 heptameric rings which stack back to back to give a disk-like structure with a central cavity, resembling the structure of eukaryotic proteasomes.

It localises to the cytoplasm. The catalysed reaction is Hydrolysis of proteins to small peptides in the presence of ATP and magnesium. alpha-casein is the usual test substrate. In the absence of ATP, only oligopeptides shorter than five residues are hydrolyzed (such as succinyl-Leu-Tyr-|-NHMec, and Leu-Tyr-Leu-|-Tyr-Trp, in which cleavage of the -Tyr-|-Leu- and -Tyr-|-Trp bonds also occurs).. Its function is as follows. Cleaves peptides in various proteins in a process that requires ATP hydrolysis. Has a chymotrypsin-like activity. Plays a major role in the degradation of misfolded proteins. The chain is ATP-dependent Clp protease proteolytic subunit from Dehalococcoides mccartyi (strain ATCC BAA-2100 / JCM 16839 / KCTC 5957 / BAV1).